The chain runs to 342 residues: Ribosomal RNA small subunit methyltransferase C (342 aa).

The protein belongs to the methyltransferase superfamily. RsmC family. Monomer.

The protein localises to the cytoplasm. It carries out the reaction guanosine(1207) in 16S rRNA + S-adenosyl-L-methionine = N(2)-methylguanosine(1207) in 16S rRNA + S-adenosyl-L-homocysteine + H(+). Specifically methylates the guanine in position 1207 of 16S rRNA in the 30S particle. In Shewanella sp. (strain MR-7), this protein is Ribosomal RNA small subunit methyltransferase C.